The following is a 273-amino-acid chain: Urease accessory protein UreD (273 aa).

Belongs to the UreD family. In terms of assembly, ureD, UreF and UreG form a complex that acts as a GTP-hydrolysis-dependent molecular chaperone, activating the urease apoprotein by helping to assemble the nickel containing metallocenter of UreC. The UreE protein probably delivers the nickel.

It localises to the cytoplasm. Required for maturation of urease via the functional incorporation of the urease nickel metallocenter. This is Urease accessory protein UreD from Rhizobium leguminosarum bv. trifolii (strain WSM2304).